A 652-amino-acid polypeptide reads, in one-letter code: Putative enzymatic polyprotein (652 aa).

One can recognise a Peptidase A2 domain in the interval Tyr21–Phe99. Asp26 is a catalytic residue. The Reverse transcriptase domain maps to Phe231–Ile413. Asp301, Asp364, and Asp365 together coordinate Mg(2+).

It catalyses the reaction DNA(n) + a 2'-deoxyribonucleoside 5'-triphosphate = DNA(n+1) + diphosphate. It carries out the reaction Endonucleolytic cleavage to 5'-phosphomonoester.. Encodes for at least two polypeptides: protease (PR) and reverse transcriptase (RT). The protease processes the polyprotein in cis. Reverse transcriptase is multifunctional enzyme that converts the viral RNA genome into dsDNA in viral cytoplasmic capsids. This enzyme displays a DNA polymerase activity that can copy either DNA or RNA templates, and a ribonuclease H (RNase H) activity that cleaves the RNA strand of RNA-DNA heteroduplexes in a partially processive 3'- to 5'-endonucleasic mode. Neo-synthesized pregenomic RNA (pgRNA) are encapsidated, and reverse-transcribed inside the nucleocapsid. Partial (+)DNA is synthesized from the (-)DNA template and generates the relaxed circular DNA (RC-DNA) genome. After budding and infection, the RC-DNA migrates in the nucleus, and is converted into a plasmid-like covalently closed circular DNA (cccDNA). This Cassava vein mosaic virus (CsVMV) protein is Putative enzymatic polyprotein.